The primary structure comprises 196 residues: uncharacterized protein (196 aa).

One can recognise an HTH cro/C1-type domain in the interval Leu12–Ala66. The segment at residues Gln23–Arg42 is a DNA-binding region (H-T-H motif). Residues Val174–Ala196 are disordered.

This is an uncharacterized protein from Sinorhizobium fredii (strain NBRC 101917 / NGR234).